Here is a 143-residue protein sequence, read N- to C-terminus: Host transcription reprogramming factor 8 (143 aa).

A signal peptide spans 1–19; sequence MHTYKFIQIALLFASVALA. A compositionally biased stretch (pro residues) spans 24-34; sequence PSPPNPPPVPQ. The disordered stretch occupies residues 24–43; sequence PSPPNPPPVPQLPNSETKSN. The C2H2-type 1 zinc finger occupies 48-71; it reads HSCEFCGVVKPSGPAYLEHYHQNH. The tract at residues 77–99 is disordered; that stretch reads GKLATPSPPNPPPVPTQKVETHA. Positions 82-91 are enriched in pro residues; the sequence is PSPPNPPPVP. A C2H2-type 2 zinc finger spans residues 103 to 126; it reads HGCEWCNKVEPSGPAYIKHYKENH.

The protein resides in the secreted. The protein localises to the host nucleus. Its function is as follows. Probable secreted effector that translocates into the nuclei of host cells to reprogram the expression of targeted genes by binding on effector binding elements in rice. This is Host transcription reprogramming factor 8 from Pyricularia oryzae (strain 70-15 / ATCC MYA-4617 / FGSC 8958) (Rice blast fungus).